Here is a 496-residue protein sequence, read N- to C-terminus: Ribose import ATP-binding protein RbsA (496 aa).

2 consecutive ABC transporter domains span residues 5 to 241 and 252 to 496; these read LQMK…VGRE and SPGE…VGGE. An ATP-binding site is contributed by 37–44; sequence GENGAGKS.

Belongs to the ABC transporter superfamily. Ribose importer (TC 3.A.1.2.1) family. As to quaternary structure, the complex is composed of an ATP-binding protein (RbsA), two transmembrane proteins (RbsC) and a solute-binding protein (RbsB).

The protein localises to the cell membrane. It carries out the reaction D-ribose(out) + ATP + H2O = D-ribose(in) + ADP + phosphate + H(+). In terms of biological role, part of the ABC transporter complex RbsABC involved in ribose import. Responsible for energy coupling to the transport system. In Caldanaerobacter subterraneus subsp. tengcongensis (strain DSM 15242 / JCM 11007 / NBRC 100824 / MB4) (Thermoanaerobacter tengcongensis), this protein is Ribose import ATP-binding protein RbsA.